Here is a 273-residue protein sequence, read N- to C-terminus: MEQLQAVIEDAFERRAEITPRNVEANLKESVAQVINMLDTGKLRVAEKINDEWVTRQWVKKAVLLSFRMEDNYFIKGGFSNYFDKIPSKFADYSSRDFRDGGFRVVPPAAVRKGAFIANNVVLMPSYVNIGAYVDEGTMVDTWATVGSCAQVGKNVHLSGGVGIGGVLEPVQASPTIIEDNCFIGARSEIVEGVIVGENSVISMGVYIGQSTRIYNRETGEVTYGRIPSGSVVVSGSLPADNGRYSLYCAVIVKQVDAKTRSKTGINELLRGI.

Substrate-binding residues include R104 and D141.

Belongs to the transferase hexapeptide repeat family. Homotrimer.

The protein resides in the cytoplasm. The enzyme catalyses (S)-2,3,4,5-tetrahydrodipicolinate + succinyl-CoA + H2O = (S)-2-succinylamino-6-oxoheptanedioate + CoA. It participates in amino-acid biosynthesis; L-lysine biosynthesis via DAP pathway; LL-2,6-diaminopimelate from (S)-tetrahydrodipicolinate (succinylase route): step 1/3. This is 2,3,4,5-tetrahydropyridine-2,6-dicarboxylate N-succinyltransferase from Nitrosomonas eutropha (strain DSM 101675 / C91 / Nm57).